The chain runs to 81 residues: Sulfur carrier protein TusA (81 aa).

Cys-19 functions as the Cysteine persulfide intermediate in the catalytic mechanism.

Belongs to the sulfur carrier protein TusA family.

The protein resides in the cytoplasm. In terms of biological role, sulfur carrier protein which probably makes part of a sulfur-relay system. The protein is Sulfur carrier protein TusA of Shewanella woodyi (strain ATCC 51908 / MS32).